Consider the following 371-residue polypeptide: Neutral protease 2 homolog MGYG_03465 (371 aa).

The N-terminal stretch at M1 to A19 is a signal peptide. A propeptide spanning residues Y20 to R188 is cleaved from the precursor. Cystine bridges form between C196/C267 and C274/C292. H316 contacts Zn(2+). E317 is an active-site residue. Zn(2+)-binding residues include H320 and D331.

It belongs to the peptidase M35 family. Zn(2+) is required as a cofactor.

The protein localises to the secreted. It catalyses the reaction Preferential cleavage of bonds with hydrophobic residues in P1'. Also 3-Asn-|-Gln-4 and 8-Gly-|-Ser-9 bonds in insulin B chain.. Functionally, secreted metalloproteinase that allows assimilation of proteinaceous substrates. Shows high activities on basic nuclear substrates such as histone and protamine. May be involved in virulence. In Arthroderma gypseum (strain ATCC MYA-4604 / CBS 118893) (Microsporum gypseum), this protein is Neutral protease 2 homolog MGYG_03465.